A 426-amino-acid chain; its full sequence is uncharacterized protein (426 aa).

The first 23 residues, Met-1–Ala-23, serve as a signal peptide directing secretion.

This is an uncharacterized protein from Methanocaldococcus jannaschii (strain ATCC 43067 / DSM 2661 / JAL-1 / JCM 10045 / NBRC 100440) (Methanococcus jannaschii).